Consider the following 273-residue polypeptide: Formamidopyrimidine-DNA glycosylase (273 aa).

The Schiff-base intermediate with DNA role is filled by proline 2. The Proton donor role is filled by glutamate 3. Lysine 58 acts as the Proton donor; for beta-elimination activity in catalysis. Residues histidine 92, arginine 111, and lysine 153 each contribute to the DNA site. The segment at methionine 238–lysine 272 adopts an FPG-type zinc-finger fold. Arginine 262 (proton donor; for delta-elimination activity) is an active-site residue.

Belongs to the FPG family. In terms of assembly, monomer. Zn(2+) is required as a cofactor.

It carries out the reaction Hydrolysis of DNA containing ring-opened 7-methylguanine residues, releasing 2,6-diamino-4-hydroxy-5-(N-methyl)formamidopyrimidine.. The enzyme catalyses 2'-deoxyribonucleotide-(2'-deoxyribose 5'-phosphate)-2'-deoxyribonucleotide-DNA = a 3'-end 2'-deoxyribonucleotide-(2,3-dehydro-2,3-deoxyribose 5'-phosphate)-DNA + a 5'-end 5'-phospho-2'-deoxyribonucleoside-DNA + H(+). Functionally, involved in base excision repair of DNA damaged by oxidation or by mutagenic agents. Acts as a DNA glycosylase that recognizes and removes damaged bases. Has a preference for oxidized purines, such as 7,8-dihydro-8-oxoguanine (8-oxoG). Has AP (apurinic/apyrimidinic) lyase activity and introduces nicks in the DNA strand. Cleaves the DNA backbone by beta-delta elimination to generate a single-strand break at the site of the removed base with both 3'- and 5'-phosphates. The sequence is that of Formamidopyrimidine-DNA glycosylase from Rickettsia bellii (strain OSU 85-389).